We begin with the raw amino-acid sequence, 524 residues long: Metal transporter Nramp2 (524 aa).

A disordered region spans residues 34-58 (AYDSDDKVSIAVSDSDSEDGGGGGG). The next 12 helical transmembrane spans lie at 70-90 (LWRF…PGNL), 98-118 (AAAG…GALV), 155-175 (LALV…IKIL), 179-199 (TVPL…FLFL), 207-227 (LEAF…IMFG), 253-273 (AVGI…SALV), 295-315 (IESI…TTVF), 341-361 (YGTA…ASGQ), 389-409 (AMIT…FFDT), 420-440 (ALNV…ITLV), 457-477 (VISW…ILSF), and 486-506 (LVRS…VYLI).

Belongs to the NRAMP (TC 2.A.55) family.

Its subcellular location is the membrane. In terms of biological role, probable metal transporter. This Oryza sativa subsp. japonica (Rice) protein is Metal transporter Nramp2 (NRAMP2).